A 59-amino-acid polypeptide reads, in one-letter code: Large ribosomal subunit protein uL30 (59 aa).

It belongs to the universal ribosomal protein uL30 family. Part of the 50S ribosomal subunit.

The polypeptide is Large ribosomal subunit protein uL30 (Geobacter metallireducens (strain ATCC 53774 / DSM 7210 / GS-15)).